Reading from the N-terminus, the 845-residue chain is P protein (845 aa).

Residues 1–57 (MRLENREGRPTSGVLEMELPQASAPSRAGLGSLGLVGLDSSNHRPQQGGSKAGSRGP) are disordered. Over 1–183 (MRLENREGRP…HLSKLRCCVQ (183 aa)) the chain is Extracellular. Over residues 26–40 (SRAGLGSLGLVGLDS) the composition is skewed to low complexity. Residues 184–204 (WLKVSGLFVFVVLCSILFSLY) form a helical membrane-spanning segment. Residues 205–337 (PDQGKFWQLL…QYLRASIEAQ (133 aa)) lie on the Cytoplasmic side of the membrane. The chain crosses the membrane as a helical span at residues 338–358 (VTIAAVILAGVYVLIIFEIVH). Residues 359 to 360 (RT) lie on the Extracellular side of the membrane. Residues 361-381 (LAAMLGSLAALAALAVIGDRP) traverse the membrane as a helical segment. Topologically, residues 382-393 (TLTQVVEWIDFE) are cytoplasmic. The chain crosses the membrane as a helical span at residues 394-414 (TLALLFGMMILVAIFSETGFF). Residues 415-429 (DYCAVKAYQLSRGRV) lie on the Extracellular side of the membrane. Residues 430-450 (WAMIIMLCLIAAVLSAFLDNV) traverse the membrane as a helical segment. Residues 451–513 (TTALLFTPVT…ELRKMGLDFA (63 aa)) lie on the Cytoplasmic side of the membrane. The chain crosses the membrane as a helical span at residues 514 to 534 (GFTAHMFAGICFVLLFSFPLL). The Extracellular segment spans residues 535–629 (RLLYWNRKLY…KKHRISDRTL (95 aa)). A helical transmembrane segment spans residues 630–650 (LTKCVTVLGLVIFMFFLNSFV). A topological domain (cytoplasmic) is located at residue Pro651. Residues 652-672 (GVHLDLGWIAILGAIWLLILA) traverse the membrane as a helical segment. Residues 673 to 687 (DIHDFEIILHRVEWA) are Extracellular-facing. A helical membrane pass occupies residues 688 to 708 (TLLFFAALFILMEALAHLHLI). At 709–730 (EYVGEQTALLIKMVPEDQRLAA) the chain is on the cytoplasmic side. The chain crosses the membrane as a helical span at residues 731 to 751 (AIIVVVWVSAIASSLIDNIPF). Over 752–773 (TATMIPVLLNLSRDPEISLPAP) the chain is Extracellular. The helical transmembrane segment at 774 to 794 (PLMYALALGACLGGNGTLIGA) threads the bilayer. Over 795-820 (SANVVCAGIAEQHGYGFSFMEFFRLG) the chain is Cytoplasmic. The chain crosses the membrane as a helical span at residues 821-841 (FPMMVVSCMVGMCYLLVAHVV). Residues 842–845 (MGWN) are Extracellular-facing.

The protein belongs to the CitM (TC 2.A.11) transporter family.

The protein localises to the melanosome membrane. It catalyses the reaction chloride(in) = chloride(out). Contributes to a melanosome-specific anion (chloride) current that modulates melanosomal pH for optimal tyrosinase activity required for melanogenesis and the melanosome maturation. One of the components of the mammalian pigmentary system. May serve as a key control point at which ethnic skin color variation is determined. Major determinant of brown and/or blue eye color. Seems to regulate the post-translational processing of tyrosinase, which catalyzes the limiting reaction in melanin synthesis. The sequence is that of P protein (Oca2) from Sus scrofa (Pig).